A 1014-amino-acid chain; its full sequence is DNA translocase FtsK 2 (1014 aa).

Residues 1–21 traverse the membrane as a helical segment; the sequence is MFWIVLIVILLLALAGLFFVR. Disordered stretches follow at residues 89–142, 283–318, and 487–525; these read ESEP…EDIA, RHAG…RRRV, and SQAV…AVSE. Positions 121-140 are enriched in acidic residues; that stretch reads EEAETEEAEAAEEEAADTED. Polar residues predominate over residues 298 to 307; it reads DVSQGQSVSD. The region spanning 662–871 is the FtsK domain; sequence GQPVVTDLGK…FQVSSKIDSR (210 aa). Residue 682 to 687 participates in ATP binding; the sequence is GSGKSV.

Belongs to the FtsK/SpoIIIE/SftA family. Homohexamer. Forms a ring that surrounds DNA.

Its subcellular location is the cell inner membrane. In terms of biological role, essential cell division protein that coordinates cell division and chromosome segregation. The N-terminus is involved in assembly of the cell-division machinery. The C-terminus functions as a DNA motor that moves dsDNA in an ATP-dependent manner towards the dif recombination site, which is located within the replication terminus region. Translocation stops specifically at Xer-dif sites, where FtsK interacts with the Xer recombinase, allowing activation of chromosome unlinking by recombination. FtsK orienting polar sequences (KOPS) guide the direction of DNA translocation. FtsK can remove proteins from DNA as it translocates, but translocation stops specifically at XerCD-dif site, thereby preventing removal of XerC and XerD from dif. In Neisseria meningitidis serogroup A / serotype 4A (strain DSM 15465 / Z2491), this protein is DNA translocase FtsK 2 (ftsK2).